Here is a 307-residue protein sequence, read N- to C-terminus: Probable GTP 3',8-cyclase (307 aa).

The 223-residue stretch at alanine 5 to alanine 227 folds into the Radical SAM core domain. A GTP-binding site is contributed by arginine 14. The [4Fe-4S] cluster site is built by cysteine 21 and cysteine 25. Position 27 (tyrosine 27) interacts with S-adenosyl-L-methionine. Cysteine 28 lines the [4Fe-4S] cluster pocket. Lysine 61 contacts GTP. Glycine 65 lines the S-adenosyl-L-methionine pocket. GTP is bound at residue threonine 89. S-adenosyl-L-methionine is bound at residue serine 113. Residue lysine 151 participates in GTP binding. Cysteine 241 and cysteine 244 together coordinate [4Fe-4S] cluster. Residue arginine 246 to arginine 248 coordinates GTP. A [4Fe-4S] cluster-binding site is contributed by cysteine 258.

It belongs to the radical SAM superfamily. MoaA family. The cofactor is [4Fe-4S] cluster.

The catalysed reaction is GTP + AH2 + S-adenosyl-L-methionine = (8S)-3',8-cyclo-7,8-dihydroguanosine 5'-triphosphate + 5'-deoxyadenosine + L-methionine + A + H(+). It participates in cofactor biosynthesis; molybdopterin biosynthesis. Catalyzes the cyclization of GTP to (8S)-3',8-cyclo-7,8-dihydroguanosine 5'-triphosphate. The sequence is that of Probable GTP 3',8-cyclase from Methanocella arvoryzae (strain DSM 22066 / NBRC 105507 / MRE50).